A 758-amino-acid chain; its full sequence is DNA ligase (758 aa).

A disordered region spans residues 1 to 28 (MPENFGAMRQDGLVSTSESDSPAPAATP). Residues 60 to 64 (DAEFD), 109 to 110 (SL), and Glu148 contribute to the NAD(+) site. The N6-AMP-lysine intermediate role is filled by Lys150. Residues Arg171, Glu208, Lys324, and Lys348 each contribute to the NAD(+) site. 4 residues coordinate Zn(2+): Cys442, Cys445, Cys461, and Cys467. The region spanning 660-749 (SVRRTLAGLT…PDHSAEAEEN (90 aa)) is the BRCT domain. The disordered stretch occupies residues 735 to 758 (LLAHGPDHSAEAEENESEGSTTND).

The protein belongs to the NAD-dependent DNA ligase family. LigA subfamily. Mg(2+) is required as a cofactor. The cofactor is Mn(2+).

The enzyme catalyses NAD(+) + (deoxyribonucleotide)n-3'-hydroxyl + 5'-phospho-(deoxyribonucleotide)m = (deoxyribonucleotide)n+m + AMP + beta-nicotinamide D-nucleotide.. Functionally, DNA ligase that catalyzes the formation of phosphodiester linkages between 5'-phosphoryl and 3'-hydroxyl groups in double-stranded DNA using NAD as a coenzyme and as the energy source for the reaction. It is essential for DNA replication and repair of damaged DNA. This chain is DNA ligase, found in Renibacterium salmoninarum (strain ATCC 33209 / DSM 20767 / JCM 11484 / NBRC 15589 / NCIMB 2235).